Consider the following 323-residue polypeptide: 4-hydroxy-3-methylbut-2-enyl diphosphate reductase (323 aa).

Residue C12 coordinates [4Fe-4S] cluster. Residues H43 and H81 each contribute to the (2E)-4-hydroxy-3-methylbut-2-enyl diphosphate site. Dimethylallyl diphosphate is bound by residues H43 and H81. Residues H43 and H81 each contribute to the isopentenyl diphosphate site. C103 serves as a coordination point for [4Fe-4S] cluster. H131 serves as a coordination point for (2E)-4-hydroxy-3-methylbut-2-enyl diphosphate. H131 contacts dimethylallyl diphosphate. Isopentenyl diphosphate is bound at residue H131. E133 acts as the Proton donor in catalysis. T170 is a binding site for (2E)-4-hydroxy-3-methylbut-2-enyl diphosphate. C198 is a binding site for [4Fe-4S] cluster. (2E)-4-hydroxy-3-methylbut-2-enyl diphosphate-binding residues include S226, N228, and S271. 3 residues coordinate dimethylallyl diphosphate: S226, N228, and S271. Isopentenyl diphosphate-binding residues include S226, N228, and S271.

It belongs to the IspH family. Requires [4Fe-4S] cluster as cofactor.

The catalysed reaction is isopentenyl diphosphate + 2 oxidized [2Fe-2S]-[ferredoxin] + H2O = (2E)-4-hydroxy-3-methylbut-2-enyl diphosphate + 2 reduced [2Fe-2S]-[ferredoxin] + 2 H(+). It catalyses the reaction dimethylallyl diphosphate + 2 oxidized [2Fe-2S]-[ferredoxin] + H2O = (2E)-4-hydroxy-3-methylbut-2-enyl diphosphate + 2 reduced [2Fe-2S]-[ferredoxin] + 2 H(+). It participates in isoprenoid biosynthesis; dimethylallyl diphosphate biosynthesis; dimethylallyl diphosphate from (2E)-4-hydroxy-3-methylbutenyl diphosphate: step 1/1. The protein operates within isoprenoid biosynthesis; isopentenyl diphosphate biosynthesis via DXP pathway; isopentenyl diphosphate from 1-deoxy-D-xylulose 5-phosphate: step 6/6. Its function is as follows. Catalyzes the conversion of 1-hydroxy-2-methyl-2-(E)-butenyl 4-diphosphate (HMBPP) into a mixture of isopentenyl diphosphate (IPP) and dimethylallyl diphosphate (DMAPP). Acts in the terminal step of the DOXP/MEP pathway for isoprenoid precursor biosynthesis. The sequence is that of 4-hydroxy-3-methylbut-2-enyl diphosphate reductase from Lysinibacillus sphaericus (strain C3-41).